Reading from the N-terminus, the 368-residue chain is MAERCFEAAMTYMIPNKQSVEVFEGLLGILDPVLTSKHVRRVYQEITVSFLMISLISDQVDSKGIVRMSDSQGDDDDSLSSLTWNSKNKLWGFLVNPVPITSSDLEKRLRISCMISSNAYRIGTNVAQVRFLLRIGTFPLVLSRELGFLCPSSSRFPSVIFVSPDKQTEMLRIISSYYSVGDTEEKNCWGILGERYLTTISEDISNLVVMAFPFLQGAFHCSSVYYLNFGCKMAAEGFHAIAREELRIALSNPVLWSDCPLKRVYDSLLQRIPTGVHISHSEEKGDPTFLPLAEYCSSHRECWICGDLKLGVDRGIGADFRHLSERRTSSPDGLDAVMSAVSRMIYHHWSIPSWVSGAFKIAKFIGAH.

The sequence is that of Protein 5 from Lettuce big-vein associated virus (isolate Japan/Kagawa) (LBVaV).